Here is a 137-residue protein sequence, read N- to C-terminus: Phosphatidylinositol N-acetylglucosaminyltransferase subunit P (137 aa).

2 helical membrane-spanning segments follow: residues 16 to 36 and 58 to 78; these read VYGF…LIWG and MAMP…YIGL.

It belongs to the PIGP family.

It localises to the membrane. It catalyses the reaction a 1,2-diacyl-sn-glycero-3-phospho-(1D-myo-inositol) + UDP-N-acetyl-alpha-D-glucosamine = a 6-(N-acetyl-alpha-D-glucosaminyl)-1-(1,2-diacyl-sn-glycero-3-phospho)-1D-myo-inositol + UDP + H(+). It participates in glycolipid biosynthesis; glycosylphosphatidylinositol-anchor biosynthesis. Functionally, part of the complex catalyzing the transfer of N-acetylglucosamine from UDP-N-acetylglucosamine to phosphatidylinositol, the first step of GPI biosynthesis. The chain is Phosphatidylinositol N-acetylglucosaminyltransferase subunit P from Arabidopsis thaliana (Mouse-ear cress).